A 143-amino-acid chain; its full sequence is Large ribosomal subunit protein uL16c (143 aa).

It belongs to the universal ribosomal protein uL16 family. Part of the 50S ribosomal subunit.

The protein localises to the plastid. It is found in the chloroplast. This Spirogyra maxima (Green alga) protein is Large ribosomal subunit protein uL16c.